A 275-amino-acid chain; its full sequence is Formamidopyrimidine-DNA glycosylase (275 aa).

Pro2 (schiff-base intermediate with DNA) is an active-site residue. Catalysis depends on Glu3, which acts as the Proton donor. The active-site Proton donor; for beta-elimination activity is the Lys58. The DNA site is built by His91, Arg109, and Arg154. The FPG-type zinc finger occupies 240 to 274 (AVYERAGLPCRVCGTPIRRLVQGQRATYFCPSCQK). The Proton donor; for delta-elimination activity role is filled by Arg264.

It belongs to the FPG family. As to quaternary structure, monomer. Requires Zn(2+) as cofactor.

It carries out the reaction Hydrolysis of DNA containing ring-opened 7-methylguanine residues, releasing 2,6-diamino-4-hydroxy-5-(N-methyl)formamidopyrimidine.. The catalysed reaction is 2'-deoxyribonucleotide-(2'-deoxyribose 5'-phosphate)-2'-deoxyribonucleotide-DNA = a 3'-end 2'-deoxyribonucleotide-(2,3-dehydro-2,3-deoxyribose 5'-phosphate)-DNA + a 5'-end 5'-phospho-2'-deoxyribonucleoside-DNA + H(+). Functionally, involved in base excision repair of DNA damaged by oxidation or by mutagenic agents. Acts as a DNA glycosylase that recognizes and removes damaged bases. Has a preference for oxidized purines, such as 7,8-dihydro-8-oxoguanine (8-oxoG). Has AP (apurinic/apyrimidinic) lyase activity and introduces nicks in the DNA strand. Cleaves the DNA backbone by beta-delta elimination to generate a single-strand break at the site of the removed base with both 3'- and 5'-phosphates. The protein is Formamidopyrimidine-DNA glycosylase of Bordetella pertussis (strain Tohama I / ATCC BAA-589 / NCTC 13251).